The following is a 104-amino-acid chain: MAAKIKKGDTVVVLTGRDAGRSGEVIQVMPKEDKAFVRGVNLVKKHQRQTQNQEGGIISKEAAIQLSNIAVADANGKPTRVGFRILDDGRKVRFAKTTGDQIDG.

This sequence belongs to the universal ribosomal protein uL24 family. In terms of assembly, part of the 50S ribosomal subunit.

Functionally, one of two assembly initiator proteins, it binds directly to the 5'-end of the 23S rRNA, where it nucleates assembly of the 50S subunit. Its function is as follows. One of the proteins that surrounds the polypeptide exit tunnel on the outside of the subunit. This chain is Large ribosomal subunit protein uL24, found in Methylorubrum extorquens (strain PA1) (Methylobacterium extorquens).